The primary structure comprises 137 residues: NADPH-dependent 7-cyano-7-deazaguanine reductase (137 aa).

Catalysis depends on cysteine 50, which acts as the Thioimide intermediate. The Proton donor role is filled by aspartate 57. Substrate contacts are provided by residues 72 to 74 (VEL) and 91 to 92 (HE).

Belongs to the GTP cyclohydrolase I family. QueF type 1 subfamily.

It localises to the cytoplasm. The enzyme catalyses 7-aminomethyl-7-carbaguanine + 2 NADP(+) = 7-cyano-7-deazaguanine + 2 NADPH + 3 H(+). The protein operates within tRNA modification; tRNA-queuosine biosynthesis. Functionally, catalyzes the NADPH-dependent reduction of 7-cyano-7-deazaguanine (preQ0) to 7-aminomethyl-7-deazaguanine (preQ1). This Synechocystis sp. (strain ATCC 27184 / PCC 6803 / Kazusa) protein is NADPH-dependent 7-cyano-7-deazaguanine reductase.